The primary structure comprises 124 residues: Flagellar transcriptional regulator FlhD (124 aa).

The protein belongs to the FlhD family. As to quaternary structure, homodimer; disulfide-linked. Forms a heterohexamer composed of two FlhC and four FlhD subunits. Each FlhC binds a FlhD dimer, forming a heterotrimer, and a hexamer assembles by dimerization of two heterotrimers.

The protein localises to the cytoplasm. Functions in complex with FlhC as a master transcriptional regulator that regulates transcription of several flagellar and non-flagellar operons by binding to their promoter region. Activates expression of class 2 flagellar genes, including fliA, which is a flagellum-specific sigma factor that turns on the class 3 genes. Also regulates genes whose products function in a variety of physiological pathways. This Pectobacterium carotovorum (Erwinia carotovora) protein is Flagellar transcriptional regulator FlhD.